A 265-amino-acid chain; its full sequence is Thiazole synthase (265 aa).

Lys103 (schiff-base intermediate with DXP) is an active-site residue. Residues Gly164, 190 to 191 (AG), and 212 to 213 (NT) contribute to the 1-deoxy-D-xylulose 5-phosphate site.

It belongs to the ThiG family. Homotetramer. Forms heterodimers with either ThiH or ThiS.

Its subcellular location is the cytoplasm. It catalyses the reaction [ThiS sulfur-carrier protein]-C-terminal-Gly-aminoethanethioate + 2-iminoacetate + 1-deoxy-D-xylulose 5-phosphate = [ThiS sulfur-carrier protein]-C-terminal Gly-Gly + 2-[(2R,5Z)-2-carboxy-4-methylthiazol-5(2H)-ylidene]ethyl phosphate + 2 H2O + H(+). The protein operates within cofactor biosynthesis; thiamine diphosphate biosynthesis. In terms of biological role, catalyzes the rearrangement of 1-deoxy-D-xylulose 5-phosphate (DXP) to produce the thiazole phosphate moiety of thiamine. Sulfur is provided by the thiocarboxylate moiety of the carrier protein ThiS. In vitro, sulfur can be provided by H(2)S. The sequence is that of Thiazole synthase from Bordetella bronchiseptica (strain ATCC BAA-588 / NCTC 13252 / RB50) (Alcaligenes bronchisepticus).